A 180-amino-acid polypeptide reads, in one-letter code: MSALTIFSVKDPQNSLWHSTNAEEIQQQLNAKGVRFERWQADRDLGAAPTAETVIAAYQHAIDKLVAEKGYQSWDVISLRADNPQKEALREKFLNEHTHGEDEVRFFVEGAGLFCLHIGDEVFQVLCEKNDLISVPAHTPHWFDMGSEPNFTAIRIFDNPEGWIAQFTGDDIASAYPRLA.

H97, H99, E103, and H141 together coordinate Fe(2+). Ni(2+)-binding residues include H97, H99, E103, and H141.

This sequence belongs to the acireductone dioxygenase (ARD) family. Monomer. Fe(2+) is required as a cofactor. Requires Mg(2+) as cofactor. The cofactor is Ni(2+). It depends on Mn(2+) as a cofactor. Co(2+) serves as cofactor.

The catalysed reaction is 1,2-dihydroxy-5-(methylsulfanyl)pent-1-en-3-one + O2 = 3-(methylsulfanyl)propanoate + CO + formate + 2 H(+). It carries out the reaction 1,2-dihydroxy-5-(methylsulfanyl)pent-1-en-3-one + O2 = 4-methylsulfanyl-2-oxobutanoate + formate + 2 H(+). Its pathway is amino-acid biosynthesis; L-methionine biosynthesis via salvage pathway; L-methionine from S-methyl-5-thio-alpha-D-ribose 1-phosphate: step 5/6. Functionally, catalyzes 2 different reactions between oxygen and the acireductone 1,2-dihydroxy-3-keto-5-methylthiopentene (DHK-MTPene) depending upon the metal bound in the active site. Fe-containing acireductone dioxygenase (Fe-ARD) produces formate and 2-keto-4-methylthiobutyrate (KMTB), the alpha-ketoacid precursor of methionine in the methionine recycle pathway. Ni-containing acireductone dioxygenase (Ni-ARD) produces methylthiopropionate, carbon monoxide and formate, and does not lie on the methionine recycle pathway. The protein is Acireductone dioxygenase (mtnD) of Klebsiella oxytoca.